The following is a 29-amino-acid chain: Ceratotoxin-B (29 aa).

In terms of assembly, homomer of four to six subunits.

The protein resides in the secreted. Female-specific peptides with potent activity against Gram-positive and Gram-negative bacteria. They have as well hemolytic activity. In Ceratitis capitata (Mediterranean fruit fly), this protein is Ceratotoxin-B (CTXB).